A 222-amino-acid polypeptide reads, in one-letter code: MTERKQGAARPLNRPLVQPQGEPQKACKLPAALLYADPLPEDLVEVGYIGAAYGIRGWIKVLPHADDASALLHARRWWLLAPPQAGLVAADASRAQPVCVKIAQSREHSGTVVAQASGVADRNLAEALKGRRVWIRRADFPAPEEDEFYWVDLIGCTVSNEQGELLGEVSGLIDNGAHQILQVACVLPDGKAGERLIPFVDAFLRSVDTAGKRIVVDWGLDY.

Residues 1-22 (MTERKQGAARPLNRPLVQPQGE) form a disordered region. The PRC barrel domain occupies 145-222 (EDEFYWVDLI…RIVVDWGLDY (78 aa)).

The protein belongs to the RimM family. As to quaternary structure, binds ribosomal protein uS19.

It localises to the cytoplasm. Functionally, an accessory protein needed during the final step in the assembly of 30S ribosomal subunit, possibly for assembly of the head region. Essential for efficient processing of 16S rRNA. May be needed both before and after RbfA during the maturation of 16S rRNA. It has affinity for free ribosomal 30S subunits but not for 70S ribosomes. In Cupriavidus necator (strain ATCC 17699 / DSM 428 / KCTC 22496 / NCIMB 10442 / H16 / Stanier 337) (Ralstonia eutropha), this protein is Ribosome maturation factor RimM.